Consider the following 299-residue polypeptide: 5-azacytidine resistance protein azr1 (299 aa).

One can recognise a PPM-type phosphatase domain in the interval 35-293 (KSHFPSPATL…DDTTITCLLI (259 aa)).

Its function is as follows. Confers azacytidine resistance in high copy. The polypeptide is 5-azacytidine resistance protein azr1 (azr1) (Schizosaccharomyces pombe (strain 972 / ATCC 24843) (Fission yeast)).